A 572-amino-acid polypeptide reads, in one-letter code: Proline--tRNA ligase (572 aa).

It belongs to the class-II aminoacyl-tRNA synthetase family. ProS type 1 subfamily. Homodimer.

The protein resides in the cytoplasm. It catalyses the reaction tRNA(Pro) + L-proline + ATP = L-prolyl-tRNA(Pro) + AMP + diphosphate. Its function is as follows. Catalyzes the attachment of proline to tRNA(Pro) in a two-step reaction: proline is first activated by ATP to form Pro-AMP and then transferred to the acceptor end of tRNA(Pro). As ProRS can inadvertently accommodate and process non-cognate amino acids such as alanine and cysteine, to avoid such errors it has two additional distinct editing activities against alanine. One activity is designated as 'pretransfer' editing and involves the tRNA(Pro)-independent hydrolysis of activated Ala-AMP. The other activity is designated 'posttransfer' editing and involves deacylation of mischarged Ala-tRNA(Pro). The misacylated Cys-tRNA(Pro) is not edited by ProRS. This Shewanella amazonensis (strain ATCC BAA-1098 / SB2B) protein is Proline--tRNA ligase.